We begin with the raw amino-acid sequence, 404 residues long: Deoxyguanosinetriphosphate triphosphohydrolase-like protein (404 aa).

A disordered region spans residues 1 to 32 (MAVGMAAPHATYASDPARSRGRLFDEPPSKTR). The segment covering 22–32 (RLFDEPPSKTR) has biased composition (basic and acidic residues). The 149-residue stretch at 69–217 (RLTHTLEVAQ…AAIADDIAYD (149 aa)) folds into the HD domain.

Belongs to the dGTPase family. Type 2 subfamily.

This is Deoxyguanosinetriphosphate triphosphohydrolase-like protein from Nitrobacter hamburgensis (strain DSM 10229 / NCIMB 13809 / X14).